The following is a 418-amino-acid chain: Putative O-antigen transporter (418 aa).

11 helical membrane-spanning segments follow: residues 8 to 28, 37 to 57, 85 to 105, 124 to 144, 165 to 185, 217 to 237, 251 to 271, 297 to 317, 334 to 354, 362 to 382, and 385 to 405; these read VWNLFGYAIPTLIAIPSLGFL, FGVYTIAIALVGYAGIFDVGL, FLVLFSCFGAFLLLIFSDGIV, LLAICIPLFILNQLWSAILEG, IPAIFVFYSATLSAAVAGLIF, LFFFGGWMTVSNIISPVMVYF, VAFYSAPAEVILKLGIIPAAI, LLMFLICLPVIIIGLLYSGLV, LNVLLIGFFFNALAMIPFSAI, ITALIHCAELVPYLALLYFMV, and YGLLGAAISWSIRVILDALLL.

This sequence belongs to the polysaccharide synthase family.

The protein localises to the cell inner membrane. It functions in the pathway bacterial outer membrane biogenesis; lipopolysaccharide biosynthesis. Could be an O-antigen transporter. The protein is Putative O-antigen transporter (rfbE) of Shigella flexneri.